The primary structure comprises 367 residues: o-succinylbenzoate synthase (367 aa).

Catalysis depends on lysine 164, which acts as the Proton donor. Residues aspartate 189, glutamate 214, and aspartate 239 each coordinate Mg(2+). The active-site Proton acceptor is lysine 263.

This sequence belongs to the mandelate racemase/muconate lactonizing enzyme family. MenC type 2 subfamily. In terms of assembly, homodimer. A divalent metal cation serves as cofactor.

The catalysed reaction is (1R,6R)-6-hydroxy-2-succinyl-cyclohexa-2,4-diene-1-carboxylate = 2-succinylbenzoate + H2O. It functions in the pathway quinol/quinone metabolism; 1,4-dihydroxy-2-naphthoate biosynthesis; 1,4-dihydroxy-2-naphthoate from chorismate: step 4/7. It participates in quinol/quinone metabolism; menaquinone biosynthesis. In terms of biological role, converts 2-succinyl-6-hydroxy-2,4-cyclohexadiene-1-carboxylate (SHCHC) to 2-succinylbenzoate (OSB). Also acts as a N-succinylamino acid racemase (NSAR) that catalyzes the racemization of N-succinyl-L-phenylglycine. Since the gene is encoded in a menaquinone synthesis operon, OSB synthase is probably the physiological activity. A pathway that requires NSAR activity has not been identified in this species, so whether NSAR is also a biological activity is unknown. This is o-succinylbenzoate synthase from Enterococcus faecalis (strain ATCC 700802 / V583).